Here is a 355-residue protein sequence, read N- to C-terminus: 3-dehydroquinate synthase (355 aa).

Residues 71–76 (EGEERK), 105–109 (GVVGD), 129–130 (TS), Lys-142, and Lys-151 contribute to the NAD(+) site. Zn(2+)-binding residues include Glu-184, His-246, and His-263.

The protein belongs to the sugar phosphate cyclases superfamily. Dehydroquinate synthase family. Requires Co(2+) as cofactor. Zn(2+) serves as cofactor. NAD(+) is required as a cofactor.

The protein localises to the cytoplasm. It carries out the reaction 7-phospho-2-dehydro-3-deoxy-D-arabino-heptonate = 3-dehydroquinate + phosphate. It participates in metabolic intermediate biosynthesis; chorismate biosynthesis; chorismate from D-erythrose 4-phosphate and phosphoenolpyruvate: step 2/7. Catalyzes the conversion of 3-deoxy-D-arabino-heptulosonate 7-phosphate (DAHP) to dehydroquinate (DHQ). This is 3-dehydroquinate synthase from Streptococcus pneumoniae serotype 19F (strain G54).